Reading from the N-terminus, the 352-residue chain is N-terminal EF-hand calcium-binding protein 1 (352 aa).

Ser-4 bears the Phosphoserine mark. EF-hand domains lie at 26–61 (KGMS…GVLS) and 60–95 (LSGE…HLGE). Asp-39, Asn-41, Asp-43, Lys-45, and Glu-50 together coordinate Ca(2+). Residues 135–163 (LLKETLNQLQSLQNSLECAMETTEEQTRQ) adopt a coiled-coil conformation. Residues 155–202 (ETTEEQTRQERQGPSKPEVLSIQWPGKRSSRRVQRHNSFSPNSPQFNV) are disordered. A compositionally biased stretch (polar residues) spans 190–202 (HNSFSPNSPQFNV). Phosphoserine is present on residues Ser-192 and Ser-197. A coiled-coil region spans residues 209–275 (EEDNQWMTQI…EEFQLALKHY (67 aa)). Residues 252 to 340 (MLVQRQMSVT…LETPELTSTM (89 aa)) enclose the ABM domain.

As to quaternary structure, interacts with STX1. May interact with CPNE6. Expressed in brain (at protein level). Expressed in the cerebral cortex only in layer 4, thalamic nuclei (the mediodorsal nucleus), hippocampus (a small band of pyramidal neurons at the boundary between CA1 and CA3), interneurons interspersed throughout the hippocampus proper, interneurons in the hilus, bodies of the neurons but also their dendritic projections (at protein level).

It is found in the cytoplasm. The protein is N-terminal EF-hand calcium-binding protein 1 (Necab1) of Mus musculus (Mouse).